The following is a 410-amino-acid chain: MYVVTPPQRSGFGSDCDLRVYQTWKGSNIFCLQGRFIFGPDVRSLGLTISLIVAPVTIFCIFVASKLMDDFSDSWGVSIILVAVVFTIYDLILLMLTSGRDPGIIPRNSHPPEPEVVDGNTGSGTSQTPRLPRVKEVEVNGKVFKVKYCDTCMLYRPPRCSHCSICNNCVERFDHHCPWVGQCIAQRNYRFFFMFVFSTTLLCVYVFAFCCVYIKKIKESEDISILKAMLKTPASIALILYTFISTFFVGGLTCFHLYLISTNQTTYENFRYSYDRHSNPHNKGVVDNFKEIFFSPIPPSKNNFRAMVPRENPMPSRSVVGGFMSPNMGKANDDIEMGRKGVWAMAEHGDGKDGNNNERFHVNDNELNELSPDMGNIVNGDEQINRPNNHPRNANWEMSPEVMALSARRA.

The next 2 helical transmembrane spans lie at 45–65 (LGLT…FVAS) and 76–96 (GVSI…LLML). A disordered region spans residues 108 to 129 (NSHPPEPEVVDGNTGSGTSQTP). Residues 147-197 (KYCDTCMLYRPPRCSHCSICNNCVERFDHHCPWVGQCIAQRNYRFFFMFVF) form the DHHC domain. Cysteine 177 functions as the S-palmitoyl cysteine intermediate in the catalytic mechanism. 2 consecutive transmembrane segments (helical) span residues 191–211 (FFFM…AFCC) and 235–255 (SIAL…LTCF). Serine 325 is subject to Phosphoserine.

The protein belongs to the DHHC palmitoyltransferase family.

The protein localises to the cell membrane. It carries out the reaction L-cysteinyl-[protein] + hexadecanoyl-CoA = S-hexadecanoyl-L-cysteinyl-[protein] + CoA. In terms of biological role, palmitoyl acyltransferase. The polypeptide is Probable protein S-acyltransferase 6 (PAT06) (Arabidopsis thaliana (Mouse-ear cress)).